The following is a 216-amino-acid chain: LexA repressor 1 (216 aa).

Residues 38–58 (TRQIGAAVGLRSMSSVARHLR) constitute a DNA-binding region (H-T-H motif). Residues Ser-140 and Lys-177 each act as for autocatalytic cleavage activity in the active site.

The protein belongs to the peptidase S24 family. As to quaternary structure, homodimer.

It catalyses the reaction Hydrolysis of Ala-|-Gly bond in repressor LexA.. In terms of biological role, represses a number of genes involved in the response to DNA damage (SOS response), including recA and lexA. In the presence of single-stranded DNA, RecA interacts with LexA causing an autocatalytic cleavage which disrupts the DNA-binding part of LexA, leading to derepression of the SOS regulon and eventually DNA repair. The chain is LexA repressor 1 from Nocardia farcinica (strain IFM 10152).